A 437-amino-acid chain; its full sequence is MKHLYIKTFGCQMNSYDSTRMADLLGESHAFQSTDDPEKADLIILNTCHIREKAEDKLFSELGRLRPLAERGVILAVGGCVGQAEGRTIFSRAPYVRMVFGPQNYHKLPQMIQRALDGETRVIAEDIPSVDKFDNLPQVRAQGVVGQVTVQEGCDKFCAFCVVPYTRGREWSRPVAAILAETEALAQQGVREVLLLGQNVNAYAGVDEEGVSYDLALLIRRVALIEGIERIRFVTSHPVDMNEDLVEVFGEIEQLAPYLHLPIQSGSDAILAAMQRGHTVEEYCTWVEKVRAVCPDVALASDFIVGFPGETEQDFQATLDLISRLGFDHAYSFKYSSRPGTPAADMPEQVDEAEKSRRLERLQQLLNTQQLQRNKARVGRRESVLVEGVSKKRDGELSGRSGTLRTVNFAGPVALIGQFVDVEIVEGLPNSLRGRLV.

Residues Lys2–Asp117 form the MTTase N-terminal domain. The [4Fe-4S] cluster site is built by Cys11, Cys48, Cys80, Cys154, Cys158, and Cys161. One can recognise a Radical SAM core domain in the interval Arg140–Gln372. The TRAM domain occupies Lys375–Val437.

It belongs to the methylthiotransferase family. MiaB subfamily. In terms of assembly, monomer. [4Fe-4S] cluster is required as a cofactor.

The protein resides in the cytoplasm. It catalyses the reaction N(6)-dimethylallyladenosine(37) in tRNA + (sulfur carrier)-SH + AH2 + 2 S-adenosyl-L-methionine = 2-methylsulfanyl-N(6)-dimethylallyladenosine(37) in tRNA + (sulfur carrier)-H + 5'-deoxyadenosine + L-methionine + A + S-adenosyl-L-homocysteine + 2 H(+). Functionally, catalyzes the methylthiolation of N6-(dimethylallyl)adenosine (i(6)A), leading to the formation of 2-methylthio-N6-(dimethylallyl)adenosine (ms(2)i(6)A) at position 37 in tRNAs that read codons beginning with uridine. The protein is tRNA-2-methylthio-N(6)-dimethylallyladenosine synthase of Magnetococcus marinus (strain ATCC BAA-1437 / JCM 17883 / MC-1).